Consider the following 597-residue polypeptide: Cytosolic phospholipase A2 gamma (597 aa).

Residues 1 to 597 form the PLA2c domain; sequence MELSSGVCPA…FKKSHNISKD (597 aa). Ser-83 serves as the catalytic Nucleophile. The Proton acceptor role is filled by Asp-417. Residues 576–597 form a disordered region; sequence RVKDPQGSQTVEFKKSHNISKD. A compositionally biased stretch (basic and acidic residues) spans 587-597; the sequence is EFKKSHNISKD.

Highly expressed in ovary, where it localizes to oocytes in preantral and antral stage follicles (at protein level). Not detected in other tissues tested.

It is found in the nucleus. The protein resides in the nucleoplasm. It localises to the nucleus envelope. The protein localises to the cytoplasm. Its subcellular location is the cell cortex. It is found in the cytoskeleton. The protein resides in the spindle. The enzyme catalyses a 1,2-diacyl-sn-glycero-3-phosphocholine + H2O = a 1-acyl-sn-glycero-3-phosphocholine + a fatty acid + H(+). The catalysed reaction is a 1-O-alkyl-2-acyl-sn-glycero-3-phosphocholine + H2O = a 1-O-alkyl-sn-glycero-3-phosphocholine + a fatty acid + H(+). It catalyses the reaction 1,2-dihexadecanoyl-sn-glycero-3-phosphocholine + H2O = 1-hexadecanoyl-sn-glycero-3-phosphocholine + hexadecanoate + H(+). It carries out the reaction 1-hexadecanoyl-2-(9Z-octadecenoyl)-sn-glycero-3-phosphocholine + H2O = 1-hexadecanoyl-sn-glycero-3-phosphocholine + (9Z)-octadecenoate + H(+). The enzyme catalyses 1-hexadecanoyl-2-(9Z,12Z-octadecadienoyl)-sn-glycero-3-phosphocholine + H2O = (9Z,12Z)-octadecadienoate + 1-hexadecanoyl-sn-glycero-3-phosphocholine + H(+). The catalysed reaction is 1-hexadecanoyl-2-(5Z,8Z,11Z,14Z-eicosatetraenoyl)-sn-glycero-3-phosphocholine + H2O = 1-hexadecanoyl-sn-glycero-3-phosphocholine + (5Z,8Z,11Z,14Z)-eicosatetraenoate + H(+). It catalyses the reaction 1-O-hexadecyl-2-(5Z,8Z,11Z,14Z)-eicosatetraenoyl-sn-glycero-3-phosphocholine + H2O = 1-O-hexadecyl-sn-glycero-3-phosphocholine + (5Z,8Z,11Z,14Z)-eicosatetraenoate + H(+). It carries out the reaction 1-hexadecanoyl-2-(5Z,8Z,11Z,14Z-eicosatetraenoyl)-sn-glycero-3-phosphocholine + H2O = 2-(5Z,8Z,11Z,14Z)-eicosatetraenoyl-sn-glycero-3-phosphocholine + hexadecanoate + H(+). The enzyme catalyses a 1-acyl-sn-glycero-3-phosphocholine + H2O = sn-glycerol 3-phosphocholine + a fatty acid + H(+). The catalysed reaction is 1-hexadecanoyl-sn-glycero-3-phosphocholine + H2O = sn-glycerol 3-phosphocholine + hexadecanoate + H(+). It catalyses the reaction 2 1-hexadecanoyl-sn-glycero-3-phosphocholine = 1,2-dihexadecanoyl-sn-glycero-3-phosphocholine + sn-glycerol 3-phosphocholine. It carries out the reaction 1-hexadecanoyl-sn-glycero-3-phosphoethanolamine + 1-hexadecanoyl-sn-glycero-3-phosphocholine = 1,2-dihexadecanoyl-sn-glycero-3-phosphoethanolamine + sn-glycerol 3-phosphocholine. The enzyme catalyses 1-hexadecanoyl-sn-glycero-3-phosphoethanolamine + 1-hexadecanoyl-sn-glycero-3-phosphocholine = sn-glycero-3-phosphoethanolamine + 1,2-dihexadecanoyl-sn-glycero-3-phosphocholine. The catalysed reaction is 2 1-hexadecanoyl-sn-glycero-3-phosphoethanolamine = 1,2-dihexadecanoyl-sn-glycero-3-phosphoethanolamine + sn-glycero-3-phosphoethanolamine. It catalyses the reaction 1-O-hexadecyl-sn-glycero-3-phosphocholine + 1-hexadecanoyl-sn-glycero-3-phosphocholine = 1-O-hexadecyl-2-hexadecanoyl-sn-glycero-3-phosphocholine + sn-glycerol 3-phosphocholine. It carries out the reaction a 1-O-(1Z-alkenyl)-sn-glycero-3-phosphoethanolamine + 1-hexadecanoyl-sn-glycero-3-phosphocholine = 1-O-(1Z)-alkenyl-2-hexadecanoyl-sn-glycero-3-phosphoethanolamine + sn-glycerol 3-phosphocholine. The enzyme catalyses 1-O-hexadecyl-sn-glycero-3-phosphocholine + 1-hexadecanoyl-sn-glycero-3-phosphoethanolamine = 1-O-hexadecyl-2-hexadecanoyl-sn-glycero-3-phosphocholine + sn-glycero-3-phosphoethanolamine. The catalysed reaction is 1-octadecanoyl-2-(5Z,8Z,11Z,14Z)-eicosatetraenoyl-sn-glycero-3-phosphoethanolamine + 1-hexadecanoyl-sn-glycero-3-phosphocholine = 1-octadecanoyl-sn-glycero-3-phosphoethanolamine + 1-hexadecanoyl-2-(5Z,8Z,11Z,14Z-eicosatetraenoyl)-sn-glycero-3-phosphocholine. It catalyses the reaction 1-octadecanoyl-2-(5Z,8Z,11Z,14Z)-eicosatetraenoyl-sn-glycero-3-phosphoethanolamine + 1-O-hexadecyl-sn-glycero-3-phosphocholine = 1-octadecanoyl-sn-glycero-3-phosphoethanolamine + 1-O-hexadecyl-2-(5Z,8Z,11Z,14Z)-eicosatetraenoyl-sn-glycero-3-phosphocholine. It carries out the reaction 1-hexadecanoyl-2-(9Z,12Z-octadecadienoyl)-sn-glycero-3-phosphocholine + a 1-O-(1Z-alkenyl)-sn-glycero-3-phosphoethanolamine = 1-O-(1Z-alkenyl)-2-(9Z,12Z-octadecadienoyl)-sn-glycero-3-phosphoethanolamine + 1-hexadecanoyl-sn-glycero-3-phosphocholine. The enzyme catalyses 1-hexadecanoyl-2-(5Z,8Z,11Z,14Z-eicosatetraenoyl)-sn-glycero-3-phosphocholine + a 1-O-(1Z-alkenyl)-sn-glycero-3-phosphoethanolamine = 1-O-(1Z)-alkenyl-2-(5Z,8Z,11Z,14Z)-eicosatetraenoyl-sn-glycero-3-phosphoethanolamine + 1-hexadecanoyl-sn-glycero-3-phosphocholine. Its function is as follows. Calcium-independent phospholipase, lysophospholipase and O-acyltransferase involved in phospholipid remodeling. Preferentially hydrolyzes the ester bond of the fatty acyl group attached at sn-2 position of phospholipids with choline and ethanolamine head groups, producing lysophospholipids that are used in deacylation-reacylation cycles. Transfers the sn-1 fatty acyl from one lysophospholipid molecule to the sn-2 position of another lysophospholipid to form diacyl, alkylacyl and alkenylacyl glycerophospholipids. Cleaves ester bonds but not alkyl or alkenyl ether bonds at the sn-1 position of lysophospholipids. Catalyzes sn-2 fatty acyl transfer from phospholipids to the sn-2 position of 1-O-alkyl or 1-O-alkenyl lysophospholipids with lower efficiency. This Mus musculus (Mouse) protein is Cytosolic phospholipase A2 gamma.